We begin with the raw amino-acid sequence, 158 residues long: MVEKVPMTPGGFVKLQEELRWRQQEERPRIIEAIAEARAHGDLSENAEYHAAKEAQSHNEGRISELEDLTARAEVIDLTKMSGDKIKFGAKVKLIDEDTEEEKTYQIVGDQEADVKAGRISISSPIARALIGKEVGDSIEVNAPGGSKAYEILQVSWG.

Belongs to the GreA/GreB family.

In terms of biological role, necessary for efficient RNA polymerase transcription elongation past template-encoded arresting sites. The arresting sites in DNA have the property of trapping a certain fraction of elongating RNA polymerases that pass through, resulting in locked ternary complexes. Cleavage of the nascent transcript by cleavage factors such as GreA or GreB allows the resumption of elongation from the new 3'terminus. GreA releases sequences of 2 to 3 nucleotides. The chain is Transcription elongation factor GreA from Rhizobium johnstonii (strain DSM 114642 / LMG 32736 / 3841) (Rhizobium leguminosarum bv. viciae).